A 609-amino-acid polypeptide reads, in one-letter code: Adenine deaminase (609 aa).

This sequence belongs to the metallo-dependent hydrolases superfamily. Adenine deaminase family. Requires Mn(2+) as cofactor.

The enzyme catalyses adenine + H2O + H(+) = hypoxanthine + NH4(+). In Cenarchaeum symbiosum (strain A), this protein is Adenine deaminase.